Reading from the N-terminus, the 368-residue chain is Chorismate synthase (368 aa).

Residue R46 participates in NADP(+) binding. Residues 124-126 (RAS), G284, 299-303 (KPTPS), and R326 each bind FMN.

Belongs to the chorismate synthase family. It depends on FMNH2 as a cofactor.

The enzyme catalyses 5-O-(1-carboxyvinyl)-3-phosphoshikimate = chorismate + phosphate. Its pathway is metabolic intermediate biosynthesis; chorismate biosynthesis; chorismate from D-erythrose 4-phosphate and phosphoenolpyruvate: step 7/7. Catalyzes the anti-1,4-elimination of the C-3 phosphate and the C-6 proR hydrogen from 5-enolpyruvylshikimate-3-phosphate (EPSP) to yield chorismate, which is the branch point compound that serves as the starting substrate for the three terminal pathways of aromatic amino acid biosynthesis. This reaction introduces a second double bond into the aromatic ring system. In Pyrobaculum arsenaticum (strain DSM 13514 / JCM 11321 / PZ6), this protein is Chorismate synthase.